The following is a 430-amino-acid chain: Dihydroorotase (430 aa).

Positions 57 and 59 each coordinate Zn(2+). Substrate contacts are provided by residues 59–61 (HLR) and asparagine 91. 3 residues coordinate Zn(2+): aspartate 151, histidine 178, and histidine 231. Asparagine 277 contributes to the substrate binding site. Aspartate 304 lines the Zn(2+) pocket. Aspartate 304 is a catalytic residue. Residues histidine 308 and 322–323 (PG) contribute to the substrate site.

This sequence belongs to the metallo-dependent hydrolases superfamily. DHOase family. Class I DHOase subfamily. The cofactor is Zn(2+).

It catalyses the reaction (S)-dihydroorotate + H2O = N-carbamoyl-L-aspartate + H(+). Its pathway is pyrimidine metabolism; UMP biosynthesis via de novo pathway; (S)-dihydroorotate from bicarbonate: step 3/3. Catalyzes the reversible cyclization of carbamoyl aspartate to dihydroorotate. This is Dihydroorotase from Mycobacterium tuberculosis (strain ATCC 25618 / H37Rv).